The chain runs to 196 residues: Interleukin-23 subunit alpha (196 aa).

The first 21 residues, 1 to 21 (MLDCRAVIMLWLLPWVTQGLA), serve as a signal peptide directing secretion.

The protein belongs to the IL-6 superfamily. Heterodimer with IL12B; disulfide-linked. The heterodimer is known as interleukin IL-23. Interacts with IL23R; this interaction enables recruitment of IL12RB1. Secreted by activated dendritic cells (at protein level). Detected in various tissues with higher expression in polarized Th1 cells and activated macrophages.

Its subcellular location is the secreted. Functionally, associates with IL12B to form the IL-23 interleukin, a heterodimeric cytokine which functions in innate and adaptive immunity. IL-23 may constitute with IL-17 an acute response to infection in peripheral tissues. IL-23 binds to a heterodimeric receptor complex composed of IL12RB1 and IL23R, activates the Jak-Stat signaling cascade, stimulates memory rather than naive T-cells and promotes production of pro-inflammatory cytokines. IL-23 induces autoimmune inflammation and thus may be responsible for autoimmune inflammatory diseases and may be important for tumorigenesis. Its function is as follows. Associates with IL12B to form the pro-inflammatory cytokine IL-23 that plays different roles in innate and adaptive immunity. Released by antigen-presenting cells such as dendritic cells or macrophages, binds to a heterodimeric receptor complex composed of IL12RB1 and IL23R to activate JAK2 and TYK2 which then phosphorylate the receptor to form a docking site leading to the phosphorylation of STAT3 and STAT4. This process leads to activation of several pathways including p38 MAPK or NF-kappa-B and promotes the production of pro-inflammatory cytokines such as interleukin-17A/IL17A. In turn, participates in the early and effective intracellular bacterial clearance. Promotes the expansion and survival of T-helper 17 cells, a CD4-positive helper T-cell subset that produces IL-17, as well as other IL-17-producing cells. The sequence is that of Interleukin-23 subunit alpha (Il23a) from Mus musculus (Mouse).